The sequence spans 319 residues: Aspartate carbamoyltransferase catalytic subunit (319 aa).

Arg-65 and Thr-66 together coordinate carbamoyl phosphate. Lys-93 is an L-aspartate binding site. The carbamoyl phosphate site is built by Arg-115, His-149, and Gln-152. Positions 182 and 237 each coordinate L-aspartate. The carbamoyl phosphate site is built by Gly-278 and Pro-279.

This sequence belongs to the aspartate/ornithine carbamoyltransferase superfamily. ATCase family. As to quaternary structure, heterododecamer (2C3:3R2) of six catalytic PyrB chains organized as two trimers (C3), and six regulatory PyrI chains organized as three dimers (R2).

It catalyses the reaction carbamoyl phosphate + L-aspartate = N-carbamoyl-L-aspartate + phosphate + H(+). The protein operates within pyrimidine metabolism; UMP biosynthesis via de novo pathway; (S)-dihydroorotate from bicarbonate: step 2/3. Its function is as follows. Catalyzes the condensation of carbamoyl phosphate and aspartate to form carbamoyl aspartate and inorganic phosphate, the committed step in the de novo pyrimidine nucleotide biosynthesis pathway. This Dechloromonas aromatica (strain RCB) protein is Aspartate carbamoyltransferase catalytic subunit.